Consider the following 96-residue polypeptide: Mitochondrial import inner membrane translocase subunit Tim13-B (96 aa).

A Twin CX3C motif motif is present at residues 47-70 (CFRKCIGKPGGSLDNSEQKCVAMC). Intrachain disulfides connect C47–C70 and C51–C66.

It belongs to the small Tim family. Heterohexamer; composed of 3 copies of TIMM8 (TIMM8A or TIMM8B) and 3 copies of TIMM13, named soluble 70 kDa complex. Associates with the TIM22 complex, whose core is composed of TIMM22.

It is found in the mitochondrion inner membrane. In terms of biological role, mitochondrial intermembrane chaperone that participates in the import and insertion of some multi-pass transmembrane proteins into the mitochondrial inner membrane. Also required for the transfer of beta-barrel precursors from the TOM complex to the sorting and assembly machinery (SAM complex) of the outer membrane. Acts as a chaperone-like protein that protects the hydrophobic precursors from aggregation and guide them through the mitochondrial intermembrane space. The TIMM8-TIMM13 complex mediates the import of some proteins while the predominant TIMM9-TIMM10 70 kDa complex mediates the import of much more proteins. This chain is Mitochondrial import inner membrane translocase subunit Tim13-B (timm13-b), found in Xenopus laevis (African clawed frog).